The following is a 345-amino-acid chain: NADH-quinone oxidoreductase subunit H 1 (345 aa).

Helical transmembrane passes span 11-31 (IILT…ISLL), 50-70 (PNVV…KYIF), 84-104 (FFLA…VIPF), 115-135 (VAIL…IMGG), 161-181 (LGLI…SHIV), 187-207 (AFGL…LFFI), 248-268 (YIAI…GWLS), 277-297 (VFWM…VKAI), and 309-329 (IGWK…AFLA).

It belongs to the complex I subunit 1 family. In terms of assembly, NDH-1 is composed of 14 different subunits. Subunits NuoA, H, J, K, L, M, N constitute the membrane sector of the complex.

It is found in the cell inner membrane. It carries out the reaction a quinone + NADH + 5 H(+)(in) = a quinol + NAD(+) + 4 H(+)(out). In terms of biological role, NDH-1 shuttles electrons from NADH, via FMN and iron-sulfur (Fe-S) centers, to quinones in the respiratory chain. The immediate electron acceptor for the enzyme in this species is believed to be ubiquinone. Couples the redox reaction to proton translocation (for every two electrons transferred, four hydrogen ions are translocated across the cytoplasmic membrane), and thus conserves the redox energy in a proton gradient. This subunit may bind ubiquinone. The sequence is that of NADH-quinone oxidoreductase subunit H 1 from Cereibacter sphaeroides (strain ATCC 17023 / DSM 158 / JCM 6121 / CCUG 31486 / LMG 2827 / NBRC 12203 / NCIMB 8253 / ATH 2.4.1.) (Rhodobacter sphaeroides).